We begin with the raw amino-acid sequence, 190 residues long: Potassium-transporting ATPase KdpC subunit (190 aa).

Residues 13-33 form a helical membrane-spanning segment; the sequence is VGFLLLTLVCGVVYPGIVTII.

This sequence belongs to the KdpC family. The system is composed of three essential subunits: KdpA, KdpB and KdpC.

The protein localises to the cell membrane. Part of the high-affinity ATP-driven potassium transport (or Kdp) system, which catalyzes the hydrolysis of ATP coupled with the electrogenic transport of potassium into the cytoplasm. This subunit acts as a catalytic chaperone that increases the ATP-binding affinity of the ATP-hydrolyzing subunit KdpB by the formation of a transient KdpB/KdpC/ATP ternary complex. The protein is Potassium-transporting ATPase KdpC subunit of Listeria welshimeri serovar 6b (strain ATCC 35897 / DSM 20650 / CCUG 15529 / CIP 8149 / NCTC 11857 / SLCC 5334 / V8).